A 139-amino-acid chain; its full sequence is Actin-depolymerizing factor 7 (139 aa).

The ADF-H domain maps to 7–139 (GMAVDDECKL…GLDVIRGRAN (133 aa)).

Belongs to the actin-binding proteins ADF family.

Functionally, actin-depolymerizing protein. Severs actin filaments (F-actin) and binds to actin monomers. The polypeptide is Actin-depolymerizing factor 7 (ADF7) (Oryza sativa subsp. japonica (Rice)).